The primary structure comprises 1031 residues: GTPase-activating protein DDB_G0291510 (1031 aa).

The disordered stretch occupies residues 18 to 48 (VEKGDIDENNSGSINNRPLSPTLFSSNSSNN). A compositionally biased stretch (polar residues) spans 26 to 41 (NNSGSINNRPLSPTLF). The Rap-GAP domain maps to 186 to 404 (FKDLEQTQTE…RTFKDQLESI (219 aa)). Residues 471–881 (NEKINCLDVV…LSNDDCNLDN (411 aa)) enclose the CNH domain. Positions 920-950 (NNNYNNNGNNSNGGNNNNNNNNNNGCNNSLI) are disordered.

This is GTPase-activating protein DDB_G0291510 from Dictyostelium discoideum (Social amoeba).